Consider the following 120-residue polypeptide: Large ribosomal subunit protein uL18 (120 aa).

The segment covering 1–10 has biased composition (basic and acidic residues); it reads MKLNRVESTR. Positions 1 to 26 are disordered; that stretch reads MKLNRVESTRSRHRRVRRKVGGTGDR. A compositionally biased stretch (basic residues) spans 11–20; it reads SRHRRVRRKV.

It belongs to the universal ribosomal protein uL18 family. In terms of assembly, part of the 50S ribosomal subunit; part of the 5S rRNA/L5/L18/L25 subcomplex. Contacts the 5S and 23S rRNAs.

This is one of the proteins that bind and probably mediate the attachment of the 5S RNA into the large ribosomal subunit, where it forms part of the central protuberance. The chain is Large ribosomal subunit protein uL18 from Cyanothece sp. (strain PCC 7425 / ATCC 29141).